Here is a 1219-residue protein sequence, read N- to C-terminus: MMMRDGNISGPKKKKFTTKCRPFSFYKNRHIIMLINDESVYLYNLTLKPPSYYISSIVGQFYKQDNSTKNAQQLVLVSSTTLQLFEINEEAGKLELQSSQNLLGIINSIEKICLSEVDGVVITSDSGNLSILQYDNKTKKFISKIQEPMTKNGWGRNYVGENLAIDPENRCILVAAMEKNKLFYKIESNSSGSKELSSPLEAHSKQVLCLKIVALNTDHNNPLFGALELTPEKKCIINYYELDQGLNHVVKKKPNSSNSDPLPNDVNYLIPLPGHIGGMVVCGTNWCFYDKLDGPRIYLPLPRRNGQTQDSIIVNHVTHVLKKKKFFILLQNALGDLFKLTVDYDFDKEIIKNISITYFDTIPPALSLNIFKNGFLFANVLNNDKLLYQFEKLGDDLTEGELVINSSDYESLNSVRESVTSFKLKGLDNLALIDVLETLSPITDSKIIDSKLVTLSSHSYVKSITHGVPTTTLVESPLPITPTDIFTTKLSLESANDEYLVISSSLSSKTLVLSIGEVVEDVEDSEFVLDQPTIAVQQVGIASVVQIYSNGIKHVRTVNGNKKTTDWFPPAGITITHATTNNQQVLIALSNLSVVYFEIDATDDQLIEYQDRLEIATTITAMAIQENISEKSPFAIIGCSDETIQVVSLQEHNCLEIKSLQALSANSSSLKMLKSSGKETHVHIGMENGVYARIKIDTINGNLSNSRVKYIGSKPVSLSVIKFSNEIEGILAISSAPWISYLYRDSFKITPLLEIDITNGSSFISEDIGGEGIVGIKDNNLIIFSVGKEDSVFDPSQDLTIATTKLRYTPRKMITNGNRLFISESEYNVQGPFKCNINGDVKENVDEDYYEAFGYEWKQNSWASCIQVVDSKSNQVIQSLQLDGNESIVSMSAVSFNKTSTPSVPASHLVVGVCTNQTILPNSYDKSYLYTFKIGKKHLQLVHKTELDHIPQVLENFQDKLLVASGNHIRLYDIGQKQLLKKSTTIIDFSTNINKIIPQTNRIIICDSHKSSIVFAKFDESQNQFVPFADDVMKRQITSIMNLDIDTLIGGDKFGNIFVTRIDEDISKQADDDWTILKTQDGILNSCPYKLQNLIEFHIGDIITSFNLGCLNLAGTESVIYTGLQGTIGLLIPLVSKSEVELLFNLQLYMQQSQNNLVGKDHLKLRSYYNPIKNVIDGDLLERFLEFDISLKIEISRKLNKSVNDIEKKLIDLRNRSAF.

Belongs to the RSE1 family. As to quaternary structure, associated with the spliceosome.

Its subcellular location is the nucleus. Its function is as follows. Involved in pre-mRNA splicing and cell cycle control. The polypeptide is Pre-mRNA-splicing factor RSE1 (RSE1) (Candida albicans (strain SC5314 / ATCC MYA-2876) (Yeast)).